Here is a 495-residue protein sequence, read N- to C-terminus: MADRNLRDLLAPWVAGLPARELREMTLDSRVAAAGDLFVAVVGHQADGRRYIPQAIAQGVAAIIAEAKDEATDGEIREMHGVPVVYLNQLNERLSALAGRFYHEPSENMRLVAVTGTNGKTTTTQLLAQWSQLLGETSAVMGTVGNGLLGKVIPTENTTGSAVDVQHVLASLVAQGATFGAMEVSSHGLVQHRVAALKFAASVFTNLSRDHLDYHGDMAHYEAAKWMLYSTHHHGQAIVNADDEVGRRWLASLPDAVAVSMEGHINPNCHGRWLKAEAVEYHDRGATIRFASSWGDGEIESRLMGAFNVSNLLLALATLLALGYPLTNLLKTAARLQPVCGRMEVFTAPGKPTVVVDYAHTPDALEKALQAARLHCAGKLWCVFGCGGDRDKGKRPLMGAIAEEFADIVVVTDDNPRTEEPRAIINDILAGMLDAGQVRVMEGRTEAVTNAIMQAKDNDVVLIAGKGHEDYQIVGTQRLDYSDRVTAARLLGVIA.

UDP-N-acetyl-alpha-D-muramoyl-L-alanyl-D-glutamate-binding positions include L27, S29, and 44 to 46 (HQA). Residue 116–122 (GTNGKTT) coordinates ATP. Residues N157, 158-159 (TT), S185, Q191, and R193 contribute to the UDP-N-acetyl-alpha-D-muramoyl-L-alanyl-D-glutamate site. Residue K225 is modified to N6-carboxylysine. Meso-2,6-diaminopimelate-binding positions include R390, 414–417 (DNPR), G465, and E469. Positions 414-417 (DNPR) match the Meso-diaminopimelate recognition motif motif.

This sequence belongs to the MurCDEF family. MurE subfamily. Requires Mg(2+) as cofactor. Post-translationally, carboxylation is probably crucial for Mg(2+) binding and, consequently, for the gamma-phosphate positioning of ATP.

The protein resides in the cytoplasm. The catalysed reaction is UDP-N-acetyl-alpha-D-muramoyl-L-alanyl-D-glutamate + meso-2,6-diaminopimelate + ATP = UDP-N-acetyl-alpha-D-muramoyl-L-alanyl-gamma-D-glutamyl-meso-2,6-diaminopimelate + ADP + phosphate + H(+). It participates in cell wall biogenesis; peptidoglycan biosynthesis. Its function is as follows. Catalyzes the addition of meso-diaminopimelic acid to the nucleotide precursor UDP-N-acetylmuramoyl-L-alanyl-D-glutamate (UMAG) in the biosynthesis of bacterial cell-wall peptidoglycan. The polypeptide is UDP-N-acetylmuramoyl-L-alanyl-D-glutamate--2,6-diaminopimelate ligase (Salmonella choleraesuis (strain SC-B67)).